The sequence spans 316 residues: Type II restriction enzyme BsuBI (316 aa).

Belongs to the BsuBI/PstI type II restriction endonuclease family. As to quaternary structure, homodimer. The cofactor is Mg(2+).

It carries out the reaction Endonucleolytic cleavage of DNA to give specific double-stranded fragments with terminal 5'-phosphates.. Its function is as follows. A P subtype restriction enzyme that recognizes the double-stranded sequence 5'-CTGCAG-3' and cleaves after A-5. The polypeptide is Type II restriction enzyme BsuBI (hsdBR) (Bacillus subtilis).